A 696-amino-acid polypeptide reads, in one-letter code: Probable glutamine--fructose-6-phosphate aminotransferase [isomerizing] (696 aa).

The active-site For GATase activity is the Cys-2. The Glutamine amidotransferase type-2 domain maps to 2-303; that stretch reads CGIFGYINYL…DDDIAHVRDG (302 aa). SIS domains follow at residues 375–514 and 547–686; these read YYDI…DSVS and AIEQ…VDQP.

It catalyses the reaction D-fructose 6-phosphate + L-glutamine = D-glucosamine 6-phosphate + L-glutamate. It participates in nucleotide-sugar biosynthesis; UDP-N-acetyl-alpha-D-glucosamine biosynthesis; alpha-D-glucosamine 6-phosphate from D-fructose 6-phosphate: step 1/1. In terms of biological role, involved in amino sugar synthesis (formation of chitin, supplies the amino sugars of asparagine-linked oligosaccharides of glycoproteins). This Schizosaccharomyces pombe (strain 972 / ATCC 24843) (Fission yeast) protein is Probable glutamine--fructose-6-phosphate aminotransferase [isomerizing].